A 351-amino-acid polypeptide reads, in one-letter code: Dihydroorotate dehydrogenase (quinone) (351 aa).

Residues 61–65 and Thr85 contribute to the FMN site; that span reads AGLDK. Lys65 lines the substrate pocket. Residue 110–114 coordinates substrate; that stretch reads NRMGF. FMN contacts are provided by Asn139 and Asn172. Asn172 provides a ligand contact to substrate. Ser175 (nucleophile) is an active-site residue. Residue Asn177 participates in substrate binding. FMN-binding residues include Lys217 and Thr245. 246-247 lines the substrate pocket; it reads NT. Residues Gly268, Gly297, and 318 to 319 contribute to the FMN site; that span reads YT.

This sequence belongs to the dihydroorotate dehydrogenase family. Type 2 subfamily. Monomer. FMN is required as a cofactor.

The protein resides in the cell membrane. The enzyme catalyses (S)-dihydroorotate + a quinone = orotate + a quinol. It participates in pyrimidine metabolism; UMP biosynthesis via de novo pathway; orotate from (S)-dihydroorotate (quinone route): step 1/1. Functionally, catalyzes the conversion of dihydroorotate to orotate with quinone as electron acceptor. This is Dihydroorotate dehydrogenase (quinone) from Xylella fastidiosa (strain M23).